Consider the following 156-residue polypeptide: Small ribosomal subunit protein uS7 (156 aa).

Belongs to the universal ribosomal protein uS7 family. As to quaternary structure, part of the 30S ribosomal subunit. Contacts proteins S9 and S11.

One of the primary rRNA binding proteins, it binds directly to 16S rRNA where it nucleates assembly of the head domain of the 30S subunit. Is located at the subunit interface close to the decoding center, probably blocks exit of the E-site tRNA. The protein is Small ribosomal subunit protein uS7 of Synechococcus sp. (strain CC9311).